The primary structure comprises 1254 residues: Structural polyprotein (1254 aa).

Residues 43 to 77 are host transcription inhibition; the sequence is LQAQQMQQLISAVSALTTKQNVKAPKGQRQKKQQK. Positions 60–113 are disordered; sequence TKQNVKAPKGQRQKKQQKPKEKKENQKKKPTQKKKQQQKPKPQAKKKKPGRRER. Residues 70-108 carry the Nuclear localization signal motif; the sequence is QRQKKQQKPKEKKENQKKKPTQKKKQQQKPKPQAKKKKP. Residues 84-110 are compositionally biased toward basic residues; it reads NQKKKPTQKKKQQQKPKPQAKKKKPGR. Residues 95 to 123 form a binding to the viral RNA region; it reads QQQKPKPQAKKKKPGRRERMCMKIENDCI. The interval 108-122 is ribosome-binding; it reads PGRRERMCMKIENDC. A disulfide bridge links C122 with C137. In terms of domain architecture, Peptidase S3 spans 122–270; the sequence is CIFEVKLDGK…RVTPEGTEEW (149 aa). H148 acts as the Charge relay system in catalysis. Positions 153 to 163 match the Nuclear export signal motif; that stretch reads IDNPDLAKLTY. The segment at 164-169 is interaction with spike glycoprotein E2; the sequence is KKSSKY. The Charge relay system role is filled by D170. The segment at 192–202 is dimerization of the capsid protein; it reads PEGHYNWHHGA. The active-site Charge relay system is the S222. The segment at 228–232 is dimerization of the capsid protein; sequence DNKGR. Residues 271-282 form a functions as an uncleaved signal peptide for the precursor of protein E3/E2 region; sequence SAALMMCILANT. Topologically, residues 271 to 694 are extracellular; it reads SAALMMCILA…PHEIIQYYYG (424 aa). 3 disulfides stabilise this stretch: C277/C286, C291/C295, and C294/C326. The N-linked (GlcNAc...) asparagine; by host glycan is linked to N281. N328 is a glycosylation site (N-linked (GlcNAc...) asparagine; by host). Disulfide bonds link C353–C459, C356–C362, C425–C439, C487–C599, C535–C559, and C537–C554. Interaction with host Mxra8 receptor regions lie at residues 360 to 363 and 396 to 398; these read YFCY and HAH. Residues 518–521 are interaction with host Mxra8 receptor; that stretch reads TAGN. Residue N534 is glycosylated (N-linked (GlcNAc...) asparagine; by host). Residues 550 to 556 form an interaction with host Mxra8 receptor region; sequence TINTCKI. A glycan (N-linked (GlcNAc...) asparagine; by host) is linked at N596. The helical transmembrane segment at 695–715 threads the bilayer; that stretch reads LYPAATIAAVSGASLMALLTL. Residues 716-756 lie on the Cytoplasmic side of the membrane; it reads AATCCMLATARRKCLTPYALTPGAVVPLTLGLLCCAPRANA. C719 carries the S-palmitoyl cysteine; by host lipid modification. Residues 724-728 form an interaction with the capsid protein region; that stretch reads TARRK. S-palmitoyl cysteine; by host attachment occurs at residues C729, C749, and C750. A transient transmembrane before p62-6K protein processing region spans residues 729 to 749; it reads CLTPYALTPGAVVPLTLGLLC. Cysteines 729 and 750 form a disulfide. Over 757–771 the chain is Extracellular; that stretch reads ASFAETMAYLWDENK. A helical transmembrane segment spans residues 772–792; it reads TLFWMEFAAPAAALALLACCI. Position 793 (K793) is a topological domain, cytoplasmic. A helical transmembrane segment spans residues 794–814; it reads SLICCCKPFSFLVLLSLGASA. Topologically, residues 815–1231 are extracellular; it reads KAYEHTATIP…AMTWVQRLAS (417 aa). Disulfide bonds link C865–C930, C878–C910, C879–C912, and C884–C894. Positions 900–917 are E1 fusion peptide loop; it reads VYPFMWGGAYCFCDSENT. Residue N957 is glycosylated (N-linked (GlcNAc...) asparagine; by host). 4 cysteine pairs are disulfide-bonded: C1075–C1087, C1117–C1192, C1122–C1196, and C1144–C1186. Residues 1232–1252 form a helical membrane-spanning segment; the sequence is GLGGLALIAVVVLVLVTCITM. C1249 is lipidated: S-palmitoyl cysteine; by host. C1249 is lipidated: S-stearoyl cysteine; by host. Topologically, residues 1253–1254 are cytoplasmic; it reads RR.

As to quaternary structure, homodimer. Homomultimer. Interacts with host karyopherin KPNA4; this interaction allows the nuclear import of the viral capsid protein. Interacts with spike glycoprotein E2. Interacts with host IRAK1; the interaction leads to inhibition of IRAK1-dependent signaling. In terms of assembly, the precursor of protein E3/E2 and E1 form a heterodimer shortly after synthesis. Interacts with spike glycoprotein E2. The precursor of protein E3/E2 and E1 form a heterodimer shortly after synthesis. Processing of the precursor of protein E3/E2 into E2 and E3 results in a heterodimer of the spike glycoproteins E2 and E1. Spike at virion surface are constituted of a trimer of E2-E1 heterodimers. After target cell attachment and endocytosis, E1 change conformation to form homotrimers. Interacts with 6K protein. E1/E2 heterodimer interacts with host LDLR. As to quaternary structure, interacts with spike glycoprotein E1. Processing of the precursor of protein E3/E2 into E2 and E3 results in a heterodimer of the spike glycoproteins E2 and E1. Spike at virion surface are constituted of a trimer of E2-E1 heterodimers. Interacts with 6K protein. Interacts with host MXRA8; this interaction mediates virus entry. In terms of assembly, oligomer. Interacts with spike glycoprotein E1. Interacts with spike glycoprotein E2. In terms of processing, structural polyprotein: Specific enzymatic cleavages in vivo yield mature proteins. Capsid protein is auto-cleaved during polyprotein translation, unmasking a signal peptide at the N-terminus of the precursor of E3/E2. The remaining polyprotein is then targeted to the host endoplasmic reticulum, where host signal peptidase cleaves it into pE2, 6K and E1 proteins. pE2 is further processed to mature E3 and E2 by host furin in trans-Golgi vesicle. Palmitoylated via thioester bonds. These palmitoylations may induce disruption of the C-terminus transmembrane. This would result in the reorientation of E2 C-terminus from lumenal to cytoplasmic side. Post-translationally, N-glycosylated. In terms of processing, palmitoylated via thioester bonds.

The protein resides in the virion. The protein localises to the host cytoplasm. Its subcellular location is the host cell membrane. It localises to the host nucleus. It is found in the virion membrane. The protein resides in the host Golgi apparatus. The protein localises to the host trans-Golgi network. Its subcellular location is the host endoplasmic reticulum. The catalysed reaction is Autocatalytic release of the core protein from the N-terminus of the togavirus structural polyprotein by hydrolysis of a -Trp-|-Ser- bond.. In terms of biological role, forms an icosahedral capsid with a T=4 symmetry composed of 240 copies of the capsid protein surrounded by a lipid membrane through which penetrate 80 spikes composed of trimers of E1-E2 heterodimers. The capsid protein binds to the viral RNA genome at a site adjacent to a ribosome binding site for viral genome translation following genome release. Possesses a protease activity that results in its autocatalytic cleavage from the nascent structural protein. Following its self-cleavage, the capsid protein transiently associates with ribosomes, and within several minutes the protein binds to viral RNA and rapidly assembles into icosahedric core particles. The resulting nucleocapsid eventually associates with the cytoplasmic domain of the spike glycoprotein E2 at the cell membrane, leading to budding and formation of mature virions. In case of infection, new virions attach to target cells and after clathrin-mediated endocytosis their membrane fuses with the host endosomal membrane. This leads to the release of the nucleocapsid into the cytoplasm, followed by an uncoating event necessary for the genomic RNA to become accessible. The uncoating might be triggered by the interaction of capsid proteins with ribosomes. Binding of ribosomes would release the genomic RNA since the same region is genomic RNA-binding and ribosome-binding. Specifically inhibits interleukin-1 receptor-associated kinase 1/IRAK1-dependent signaling during viral entry, representing a means by which the alphaviruses may evade innate immune detection and activation prior to viral gene expression. Functionally, provides the signal sequence for the translocation of the precursor of protein E3/E2 to the host endoplasmic reticulum. Furin-cleaved E3 remains associated with spike glycoprotein E1 and mediates pH protection of the latter during the transport via the secretory pathway. After virion release from the host cell, the assembly protein E3 is gradually released in the extracellular space. Its function is as follows. Plays a role in viral attachment to target host cell, by binding to the cell receptor MXRA8. The host LDLR may also act as a cell receptor for viral entry. Synthesized as a p62 precursor which is processed by furin at the cell membrane just before virion budding, giving rise to E2-E1 heterodimer. The p62-E1 heterodimer is stable, whereas E2-E1 is unstable and dissociate at low pH. p62 is processed at the last step, presumably to avoid E1 fusion activation before its final export to cell surface. E2 C-terminus contains a transitory transmembrane that would be disrupted by palmitoylation, resulting in reorientation of the C-terminal tail from lumenal to cytoplasmic side. This step is critical since E2 C-terminus is involved in budding by interacting with capsid proteins. This release of E2 C-terminus in cytoplasm occurs lately in protein export, and precludes premature assembly of particles at the endoplasmic reticulum membrane. Acts as a viroporin that participates in virus glycoprotein processing and transport to the plasma membrane, cell permeabilization and budding of viral particles. The cation channel is permeable to Na(+)&gt;K(+)&gt;Ca(2+) in vitro. Disrupts the calcium homeostasis of the cell, probably at the endoplasmic reticulum level. This leads to cytoplasmic calcium elevation. Because of its lipophilic properties, the 6K protein is postulated to influence the selection of lipids that interact with the transmembrane domains of the glycoproteins, which, in turn, affects the deformability of the bilayer required for the extreme curvature that occurs as budding proceeds. Present in low amount in virions, about 3% compared to viral glycoproteins. In terms of biological role, class II viral fusion protein. Fusion activity is inactive as long as E1 is bound to E2 in mature virion. After virus attachment to target cell via host MXRA8 and endocytosis, acidification of the endosome induce dissociation of E1/E2 heterodimer and concomitant trimerization of the E1 subunits. This E1 trimer is fusion active, and promotes release of viral nucleocapsid in cytoplasm after endosome and viral membrane fusion. Efficient fusion requires the presence of cholesterol and sphingolipid in the target membrane. This chain is Structural polyprotein, found in Aedes (Common banded mosquito).